Here is a 610-residue protein sequence, read N- to C-terminus: UvrABC system protein C (610 aa).

The GIY-YIG domain occupies 16–94; it reads SQPGVYRMYD…IKLYQPRYNV (79 aa). Residues 204-239 form the UVR domain; the sequence is DQVLNQLVARMEQASGDLRFEEAGRLRDQIQAVRRV.

It belongs to the UvrC family. Interacts with UvrB in an incision complex.

It localises to the cytoplasm. The UvrABC repair system catalyzes the recognition and processing of DNA lesions. UvrC both incises the 5' and 3' sides of the lesion. The N-terminal half is responsible for the 3' incision and the C-terminal half is responsible for the 5' incision. The protein is UvrABC system protein C of Erwinia tasmaniensis (strain DSM 17950 / CFBP 7177 / CIP 109463 / NCPPB 4357 / Et1/99).